The chain runs to 301 residues: MKIFNTIQSVLFAAFFLKQGNCLASNGSTALMGEVDMQTPFPEWLTEFTNLTQWPGIDPPYIPLDYINLTEVPELDRYYPGQCPKISREQCSFDCYNCIDVDDVTSCFKLSQTFDDGPAPATEALLKKLRQRTTFFVLGINTVNYPDIYEHILERGHLIGTHTWSHEFLPSLSNEEIVAQIEWSIWAMNATGKHFPKYFRPPYGAIDNRVRAIVKQFGLTVVLWDLDTFDWKLITNDDFRTEEEILMDINTWKGKRKGLILEHDGARRTVEVAIKINELIGSDQLTIAECIGDTDYIERYD.

Residues 1–24 form the signal peptide; it reads MKIFNTIQSVLFAAFFLKQGNCLA. N-linked (GlcNAc...) asparagine glycosylation is found at N26, N50, and N68. A disulfide bond links C107 and C290. In terms of domain architecture, NodB homology spans 108–288; sequence FKLSQTFDDG…LIGSDQLTIA (181 aa). Catalysis depends on D115, which acts as the Proton acceptor. D115 contacts acetate. Co(2+)-binding residues include D116, H162, and H166. N-linked (GlcNAc...) asparagine glycosylation occurs at N189. Y203 is a binding site for acetate. The active-site Proton donor is H263.

This sequence belongs to the polysaccharide deacetylase family. It depends on Co(2+) as a cofactor.

The protein resides in the prospore. The catalysed reaction is [(1-&gt;4)-N-acetyl-beta-D-glucosaminyl](n) + n H2O = chitosan + n acetate. Hydrolyzes the N-acetamido groups of N-acetyl-D-glucosamine residues in chitin to form chitosan and acetate. Chitosan is a component of the spore wall. This is Chitin deacetylase 1 from Saccharomyces cerevisiae (strain ATCC 204508 / S288c) (Baker's yeast).